The chain runs to 71 residues: Beta-defensin 124 (71 aa).

The N-terminal stretch at 1-22 (MTQLLLFLVALLVLGHVPSGRS) is a signal peptide. 3 disulfides stabilise this stretch: Cys27-Cys54, Cys34-Cys48, and Cys38-Cys55.

It belongs to the beta-defensin family.

Its subcellular location is the secreted. Has antibacterial activity. This is Beta-defensin 124 (DEFB124) from Homo sapiens (Human).